The chain runs to 176 residues: 3-hydroxyanthranilate 3,4-dioxygenase (176 aa).

Position 44 (Arg44) interacts with O2. 3 residues coordinate Fe cation: His48, Glu54, and His92. Glu54 serves as a coordination point for substrate. Residues Arg96 and Glu106 each coordinate substrate. Residues Cys121, Cys124, Cys158, and Cys161 each coordinate Fe cation.

The protein belongs to the 3-HAO family. As to quaternary structure, homodimer. Fe(2+) serves as cofactor.

It carries out the reaction 3-hydroxyanthranilate + O2 = (2Z,4Z)-2-amino-3-carboxymuconate 6-semialdehyde. The protein operates within cofactor biosynthesis; NAD(+) biosynthesis; quinolinate from L-kynurenine: step 3/3. Catalyzes the oxidative ring opening of 3-hydroxyanthranilate to 2-amino-3-carboxymuconate semialdehyde, which spontaneously cyclizes to quinolinate. In Xanthomonas oryzae pv. oryzae (strain MAFF 311018), this protein is 3-hydroxyanthranilate 3,4-dioxygenase.